We begin with the raw amino-acid sequence, 76 residues long: Vasotab-TY2 (76 aa).

A signal peptide spans 1-21 (MKFALFSVLVLMLIATFVAAD). In terms of domain architecture, Kazal-like spans 22-76 (DCPRICTADYTPVCGTPSGGRRSANRTFANQCGLDSHNCLNKGATYDKLHDGECK). Intrachain disulfides connect cysteine 23/cysteine 60, cysteine 27/cysteine 53, and cysteine 35/cysteine 75.

Expressed by the salivary gland.

It localises to the secreted. Its function is as follows. Vasodilator protein that inhibits vasoconstriction of isolated rat femoral artery induced by phenylephrine. Since platelet aggregation and vasoconstriction are key hemostatic responses, particularly in small wounds, this protein likely participates in the antihemostatic responses during blood feeding. Blocks L-type calcium channels (Cav1/CACNA1) in left ventricular myocytes isolated from rat hearts. The sequence is that of Vasotab-TY2 from Tabanus yao (Horsefly).